The primary structure comprises 285 residues: Malonyl-[acyl-carrier protein] O-methyltransferase (285 aa).

It belongs to the methyltransferase superfamily.

It catalyses the reaction malonyl-[ACP] + S-adenosyl-L-methionine = malonyl-[ACP] methyl ester + S-adenosyl-L-homocysteine. Its pathway is cofactor biosynthesis; biotin biosynthesis. Its function is as follows. Converts the free carboxyl group of a malonyl-thioester to its methyl ester by transfer of a methyl group from S-adenosyl-L-methionine (SAM). It allows to synthesize pimeloyl-ACP via the fatty acid synthetic pathway. This Bacillus cytotoxicus (strain DSM 22905 / CIP 110041 / 391-98 / NVH 391-98) protein is Malonyl-[acyl-carrier protein] O-methyltransferase.